The following is a 347-amino-acid chain: Outer membrane protein A (347 aa).

The N-terminal stretch at 1 to 21 (MKKQALTIIFLLVSLVTGIQA) is a signal peptide. 8 beta stranded membrane passes run 26–36 (HWYLGTKMGWS), 63–74 (APVFGLFLGYEF), 78–86 (FSFEIENDT), 105–116 (NSLQLATKLSYP), 121–129 (FHIYTQLGG), 154–163 (PNVSLGAEYI), 168–175 (FITRLDYT), and 194–202 (DVALSFGWK). Residues 207–218 (NINEIFSSYIPQ) are hinge-like. The 128-residue stretch at 220–347 (SDKQYVALNE…RRVEIEVLSD (128 aa)) folds into the OmpA-like domain. Cys321 and Cys333 are oxidised to a cystine.

This sequence belongs to the outer membrane OOP (TC 1.B.6) superfamily. OmpA family. As to quaternary structure, monomer and homodimer.

It localises to the cell outer membrane. With TolR probably plays a role in maintaining the position of the peptidoglycan cell wall in the periplasm. Acts as a porin with low permeability that allows slow penetration of small solutes; an internal gate slows down solute passage. The polypeptide is Outer membrane protein A (Buchnera aphidicola subsp. Schizaphis graminum (strain Sg)).